Here is a 107-residue protein sequence, read N- to C-terminus: uncharacterized protein (107 aa).

A signal peptide spans 1–34; it reads MRLQWPKFITFLSTGSCCLLFLLLPCSFFPLPTA.

This is an uncharacterized protein from Saccharomyces cerevisiae (strain ATCC 204508 / S288c) (Baker's yeast).